The chain runs to 740 residues: Catalase-peroxidase 2 (740 aa).

The first 27 residues, 1–27, serve as a signal peptide directing secretion; that stretch reads MFKKTKPRISILALTISCAIYSGAALA. The segment at residues 106–228 is a cross-link (tryptophyl-tyrosyl-methioninium (Trp-Tyr) (with M-254)); the sequence is WHSAGTYRIY…LAAVQMGLIY (123 aa). Catalysis depends on His-107, which acts as the Proton acceptor. A cross-link (tryptophyl-tyrosyl-methioninium (Tyr-Met) (with W-106)) is located at residues 228 to 254; it reads YVNPEGPNGVPDPLLAAKDIRDTFGRM. Position 269 (His-269) interacts with heme b.

It belongs to the peroxidase family. Peroxidase/catalase subfamily. In terms of assembly, homodimer or homotetramer. The cofactor is heme b. Post-translationally, formation of the three residue Trp-Tyr-Met cross-link is important for the catalase, but not the peroxidase activity of the enzyme.

It catalyses the reaction H2O2 + AH2 = A + 2 H2O. It carries out the reaction 2 H2O2 = O2 + 2 H2O. Functionally, bifunctional enzyme with both catalase and broad-spectrum peroxidase activity. The chain is Catalase-peroxidase 2 from Cellvibrio japonicus (strain Ueda107) (Pseudomonas fluorescens subsp. cellulosa).